An 80-amino-acid polypeptide reads, in one-letter code: Serine rich endogenous peptide 15 (80 aa).

The N-terminal stretch at 1 to 28 (MSKEKSYVIALLLSLLLCLSFQVGVSEA) is a signal peptide. Short sequence motifs (SCOOP motif) lie at residues 32–46 (AVTT…CANG) and 66–80 (PRVA…GKGP). The tract at residues 37–80 (YSDSPRCANGSSASPPTRHCPRGRPRPPTPRVAVHSNSTKGKGP) is disordered. 2 short sequence motifs (sxS motif essential for MIK2 binding) span residues 38–40 (SDS) and 72–74 (SNS). Polar residues predominate over residues 71 to 80 (HSNSTKGKGP).

The protein belongs to the serine rich endogenous peptide (SCOOP) phytocytokine family. Interacts with MIK2 (via extracellular leucine-rich repeat domain); this interaction triggers the formation of complex between MIK2 and the BAK1/SERK3 and SERK4 coreceptors, and subsequent BAK1 activation by phosphorylation. As to expression, mostly expressed in leaves, and, to a lower extent, in seedlings shoots, roots, stems, siliques, seeds and flowers.

It localises to the cell membrane. Its subcellular location is the secreted. The protein localises to the extracellular space. It is found in the apoplast. The protein resides in the endoplasmic reticulum. It localises to the golgi apparatus. Brassicaceae-specific phytocytokine (plant endogenous peptide released into the apoplast) perceived by MIK2 in a BAK1/SERK3 and SERK4 coreceptors-dependent manner, that modulates various physiological and antimicrobial processes including growth prevention and reactive oxygen species (ROS) response regulation. Inhibits root growth. The sequence is that of Serine rich endogenous peptide 15 from Arabidopsis thaliana (Mouse-ear cress).